The following is a 334-amino-acid chain: Ornithine carbamoyltransferase (334 aa).

Residues serine 57–threonine 60, glutamine 84, arginine 108, and histidine 135–glutamine 138 contribute to the carbamoyl phosphate site. Residues asparagine 169, aspartate 233, and serine 237–methionine 238 each bind L-ornithine. Residues cysteine 275–leucine 276 and arginine 320 contribute to the carbamoyl phosphate site.

It belongs to the aspartate/ornithine carbamoyltransferase superfamily. OTCase family.

Its subcellular location is the cytoplasm. The catalysed reaction is carbamoyl phosphate + L-ornithine = L-citrulline + phosphate + H(+). It functions in the pathway amino-acid biosynthesis; L-arginine biosynthesis; L-arginine from L-ornithine and carbamoyl phosphate: step 1/3. Its function is as follows. Reversibly catalyzes the transfer of the carbamoyl group from carbamoyl phosphate (CP) to the N(epsilon) atom of ornithine (ORN) to produce L-citrulline. In Aliivibrio fischeri (strain ATCC 700601 / ES114) (Vibrio fischeri), this protein is Ornithine carbamoyltransferase.